A 199-amino-acid chain; its full sequence is MFIVLEGIDGSGKSTQVKLLSKFLAKDGYPCVLTREPGGTSFAESLRSMILHDPIDPMARLLLIVSARVDHYNKVILPALKEGKVVVCDRFIYSTLAYQGYGDKIDLQTILDLHRLSGCLVEPDLTLLLLGSGHKKLGRDNFERMPREYLSNVCMGYEKIARMYPNIHVIKCMGVGRTSEEIVKIVQGKISEKQTSSCR.

Residue 7 to 14 participates in ATP binding; that stretch reads GIDGSGKS.

Belongs to the thymidylate kinase family.

It carries out the reaction dTMP + ATP = dTDP + ADP. Its function is as follows. Phosphorylation of dTMP to form dTDP in both de novo and salvage pathways of dTTP synthesis. The sequence is that of Thymidylate kinase from Neorickettsia sennetsu (strain ATCC VR-367 / Miyayama) (Ehrlichia sennetsu).